Here is a 427-residue protein sequence, read N- to C-terminus: GTPase Obg (427 aa).

The region spanning 1–158 (MFIDKAKIHL…LTVTLELKLI (158 aa)) is the Obg domain. In terms of domain architecture, OBG-type G spans 159–330 (ADVGLVGFPN…LLDYVSIKLK (172 aa)). GTP contacts are provided by residues 165-172 (GFPNVGKS), 190-194 (FTTLT), 212-215 (DIPG), 282-285 (NKTD), and 311-313 (SAA). Mg(2+) is bound by residues Ser-172 and Thr-192. The OCT domain maps to 347–427 (LYELKEKDTN…IYDVEFEYFH (81 aa)).

Belongs to the TRAFAC class OBG-HflX-like GTPase superfamily. OBG GTPase family. In terms of assembly, monomer. Mg(2+) is required as a cofactor.

Its subcellular location is the cytoplasm. In terms of biological role, an essential GTPase which binds GTP, GDP and possibly (p)ppGpp with moderate affinity, with high nucleotide exchange rates and a fairly low GTP hydrolysis rate. Plays a role in control of the cell cycle, stress response, ribosome biogenesis and in those bacteria that undergo differentiation, in morphogenesis control. In Alkaliphilus metalliredigens (strain QYMF), this protein is GTPase Obg.